A 381-amino-acid polypeptide reads, in one-letter code: Alkanesulfonate monooxygenase (381 aa).

Belongs to the SsuD family. As to quaternary structure, homotetramer.

The enzyme catalyses an alkanesulfonate + FMNH2 + O2 = an aldehyde + FMN + sulfite + H2O + 2 H(+). Catalyzes the desulfonation of aliphatic sulfonates. This chain is Alkanesulfonate monooxygenase, found in Escherichia coli O6:K15:H31 (strain 536 / UPEC).